The following is a 323-amino-acid chain: Mycothiol acetyltransferase (323 aa).

N-acetyltransferase domains are found at residues Glu21–Arg176 and Val173–Asn323. Glu44 contacts 1D-myo-inositol 2-(L-cysteinylamino)-2-deoxy-alpha-D-glucopyranoside. Acetyl-CoA is bound at residue Leu98–Val100. Residues Glu200, Lys240, and Glu253 each contribute to the 1D-myo-inositol 2-(L-cysteinylamino)-2-deoxy-alpha-D-glucopyranoside site. Residues Val257–Val259 and Gln264–Lys270 contribute to the acetyl-CoA site. Tyr291 contributes to the 1D-myo-inositol 2-(L-cysteinylamino)-2-deoxy-alpha-D-glucopyranoside binding site.

The protein belongs to the acetyltransferase family. MshD subfamily. In terms of assembly, monomer.

The catalysed reaction is 1D-myo-inositol 2-(L-cysteinylamino)-2-deoxy-alpha-D-glucopyranoside + acetyl-CoA = mycothiol + CoA + H(+). Its function is as follows. Catalyzes the transfer of acetyl from acetyl-CoA to desacetylmycothiol (Cys-GlcN-Ins) to form mycothiol. The protein is Mycothiol acetyltransferase of Paenarthrobacter aurescens (strain TC1).